The primary structure comprises 110 residues: UPF0251 protein PYRAB12660 (110 aa).

The protein belongs to the UPF0251 family.

The protein is UPF0251 protein PYRAB12660 of Pyrococcus abyssi (strain GE5 / Orsay).